Here is a 288-residue protein sequence, read N- to C-terminus: Bifunctional protein FolD (288 aa).

NADP(+) is bound by residues 166 to 168 (GAS) and I232.

Belongs to the tetrahydrofolate dehydrogenase/cyclohydrolase family. As to quaternary structure, homodimer.

The enzyme catalyses (6R)-5,10-methylene-5,6,7,8-tetrahydrofolate + NADP(+) = (6R)-5,10-methenyltetrahydrofolate + NADPH. The catalysed reaction is (6R)-5,10-methenyltetrahydrofolate + H2O = (6R)-10-formyltetrahydrofolate + H(+). The protein operates within one-carbon metabolism; tetrahydrofolate interconversion. Catalyzes the oxidation of 5,10-methylenetetrahydrofolate to 5,10-methenyltetrahydrofolate and then the hydrolysis of 5,10-methenyltetrahydrofolate to 10-formyltetrahydrofolate. This Yersinia pseudotuberculosis serotype O:1b (strain IP 31758) protein is Bifunctional protein FolD.